A 227-amino-acid chain; its full sequence is MPDIKLLSEGIFEIMKDKRQLATLNLDPGKVVYGEKLISVEGAEYRTWDPRRSKLGAMVLKKFNIPLSKDSKVLYLGAASGTTVSHVSDIASEGAVYSVEFASRSMRDFIRLASRRKNIFPILADAGKPDSYAHIVEPVDLIFQDVAQPNQAEIAARNAARFLNKNGYLLLSIKARSIDTAASPKEIFKEEVKKLEQAFEPGFEILTARDLMPYHEDHLGVLAKLKE.

S-adenosyl-L-methionine-binding positions include 82-83 (TT), 100-101 (EF), 125-126 (DA), and 145-148 (DVAQ).

The protein belongs to the methyltransferase superfamily. Fibrillarin family. As to quaternary structure, interacts with nop5. Component of box C/D small ribonucleoprotein (sRNP) particles that contain rpl7ae, FlpA and nop5, plus a guide RNA.

In terms of biological role, involved in pre-rRNA and tRNA processing. Utilizes the methyl donor S-adenosyl-L-methionine to catalyze the site-specific 2'-hydroxyl methylation of ribose moieties in rRNA and tRNA. Site specificity is provided by a guide RNA that base pairs with the substrate. Methylation occurs at a characteristic distance from the sequence involved in base pairing with the guide RNA. This chain is Fibrillarin-like rRNA/tRNA 2'-O-methyltransferase, found in Methanosarcina acetivorans (strain ATCC 35395 / DSM 2834 / JCM 12185 / C2A).